We begin with the raw amino-acid sequence, 660 residues long: MSGFELVSDYEPKGDQPEAIRKLSEGLNKGLKHQVLLGVTGSGKTFTVANVIQNVQKPTLVIAHNKTLAAQLFSEFREFFPNNAVEYFVSYYDYYQPEAYLPTTDTYIEKDSSVNEEIDRLRLSATKSLIERKDVIVVSSVSSIYNIGSPDEWRRMSVILRTGDEVGRSDLFAALINIHYERNDIESAKGSFRSKGDTIEVFPAQDNHGVRIELFGDEIDRISSFDPVTGKTIDEVKEDNSIVIYPAKHFVMPQEEMVKALGSIEKELEGQVAKLVSENRILESQRLTQRAKFDLEMIRELGYCSGIENYSRHFDGRKPGDPPSSLLEFFPDDFLLVIDESHVTIPQIRGMHNGDRARKEALINYGFRLPSAYDNRPLTYNEFHHKINQAIYVSATPADYELGISSAVVEQIIRPTGLVDPVVFIRPVENQIDDLIGEVNKVTEKGYRTLVTTLTKRMAEDLTEYLLEMGIRVRYMHSDIDTLERAEIIRDLRKGVFDVLVGINLLREGLDIPEVAFVAILDADKEGFLRSERSLIQTMGRASRNADGYVILYAGKVTGSIEAALRETNRRRQIQLAYNEKHGIVPQTIHKALQRELVETEYGEVVSEVLGVAEDLSDIEIADMVIELEAEMHLAAKNLEFERAAALRDNIKELRSTYSL.

The Helicase ATP-binding domain occupies glutamate 25–asparagine 183. Residue glycine 38–threonine 45 coordinates ATP. The Beta-hairpin motif lies at tyrosine 91 to valine 114. In terms of domain architecture, Helicase C-terminal spans glutamine 431–leucine 593. A UVR domain is found at alanine 622–threonine 657.

Belongs to the UvrB family. As to quaternary structure, forms a heterotetramer with UvrA during the search for lesions. Interacts with UvrC in an incision complex.

The protein localises to the cytoplasm. Functionally, the UvrABC repair system catalyzes the recognition and processing of DNA lesions. A damage recognition complex composed of 2 UvrA and 2 UvrB subunits scans DNA for abnormalities. Upon binding of the UvrA(2)B(2) complex to a putative damaged site, the DNA wraps around one UvrB monomer. DNA wrap is dependent on ATP binding by UvrB and probably causes local melting of the DNA helix, facilitating insertion of UvrB beta-hairpin between the DNA strands. Then UvrB probes one DNA strand for the presence of a lesion. If a lesion is found the UvrA subunits dissociate and the UvrB-DNA preincision complex is formed. This complex is subsequently bound by UvrC and the second UvrB is released. If no lesion is found, the DNA wraps around the other UvrB subunit that will check the other stand for damage. In Methanococcoides burtonii (strain DSM 6242 / NBRC 107633 / OCM 468 / ACE-M), this protein is UvrABC system protein B.